A 492-amino-acid polypeptide reads, in one-letter code: Bifunctional protein GlmU (492 aa).

The segment at 1 to 238 (MRDAAVVILA…AALVAGVNDR (238 aa)) is pyrophosphorylase. Residues 9-12 (LAAG), lysine 23, glutamine 80, and 85-86 (GT) each bind UDP-N-acetyl-alpha-D-glucosamine. Aspartate 111 is a binding site for Mg(2+). Residues glycine 148, glutamate 163, asparagine 178, and asparagine 236 each coordinate UDP-N-acetyl-alpha-D-glucosamine. Asparagine 236 serves as a coordination point for Mg(2+). The interval 239–259 (VQLADLAAVLNRRIVEGHQRA) is linker. The segment at 260-492 (GVTIIDPAST…EDQGPEATGE (233 aa)) is N-acetyltransferase. The UDP-N-acetyl-alpha-D-glucosamine site is built by arginine 341 and lysine 359. The Proton acceptor role is filled by histidine 371. The UDP-N-acetyl-alpha-D-glucosamine site is built by tyrosine 374 and asparagine 385. Residues alanine 388, 394–395 (NY), serine 413, and alanine 431 contribute to the acetyl-CoA site. Positions 469–483 (EAAAAAGAGAGAAAE) are enriched in low complexity. A disordered region spans residues 469-492 (EAAAAAGAGAGAAAEDQGPEATGE).

The protein in the N-terminal section; belongs to the N-acetylglucosamine-1-phosphate uridyltransferase family. In the C-terminal section; belongs to the transferase hexapeptide repeat family. Homotrimer. Requires Mg(2+) as cofactor.

The protein localises to the cytoplasm. The catalysed reaction is alpha-D-glucosamine 1-phosphate + acetyl-CoA = N-acetyl-alpha-D-glucosamine 1-phosphate + CoA + H(+). The enzyme catalyses N-acetyl-alpha-D-glucosamine 1-phosphate + UTP + H(+) = UDP-N-acetyl-alpha-D-glucosamine + diphosphate. It functions in the pathway nucleotide-sugar biosynthesis; UDP-N-acetyl-alpha-D-glucosamine biosynthesis; N-acetyl-alpha-D-glucosamine 1-phosphate from alpha-D-glucosamine 6-phosphate (route II): step 2/2. The protein operates within nucleotide-sugar biosynthesis; UDP-N-acetyl-alpha-D-glucosamine biosynthesis; UDP-N-acetyl-alpha-D-glucosamine from N-acetyl-alpha-D-glucosamine 1-phosphate: step 1/1. Its pathway is bacterial outer membrane biogenesis; LPS lipid A biosynthesis. Functionally, catalyzes the last two sequential reactions in the de novo biosynthetic pathway for UDP-N-acetylglucosamine (UDP-GlcNAc). The C-terminal domain catalyzes the transfer of acetyl group from acetyl coenzyme A to glucosamine-1-phosphate (GlcN-1-P) to produce N-acetylglucosamine-1-phosphate (GlcNAc-1-P), which is converted into UDP-GlcNAc by the transfer of uridine 5-monophosphate (from uridine 5-triphosphate), a reaction catalyzed by the N-terminal domain. The polypeptide is Bifunctional protein GlmU (Mycolicibacterium vanbaalenii (strain DSM 7251 / JCM 13017 / BCRC 16820 / KCTC 9966 / NRRL B-24157 / PYR-1) (Mycobacterium vanbaalenii)).